We begin with the raw amino-acid sequence, 1008 residues long: Kinesin-like protein KIN-5C (1008 aa).

Residues 12-359 enclose the Kinesin motor domain; it reads NVQVLLRCRP…LDYAHRAKSI (348 aa). 98–105 is a binding site for ATP; that stretch reads GQTGTGKT. Residues 402-459 adopt a coiled-coil conformation; it reads KDRYQQEENERKAMADQIEQMTTSLEANQKQINDLQEKYDSELQHSADLSKKLEATEK. Disordered regions lie at residues 910 to 931, 943 to 962, and 975 to 1008; these read VEAH…TAGI, YKDY…EVPS, and ESLM…TINN. Residues 913-925 show a composition bias toward basic and acidic residues; that stretch reads HLGESQHLQESHS. Residues 979–995 are compositionally biased toward basic and acidic residues; the sequence is DEFRENHPYEPSKDRRP.

The protein belongs to the TRAFAC class myosin-kinesin ATPase superfamily. Kinesin family. KIN-5/BimC subfamily.

Its subcellular location is the cytoplasm. The protein localises to the cytoskeleton. It is found in the spindle. Responsible for microtubule translocation. May be important for the organization of phragmoplast-specific arrays of microtubules. Plays an essential role in stabilizing the mitotic spindle. Required during mitotic cytokinesis. The polypeptide is Kinesin-like protein KIN-5C (Oryza sativa subsp. japonica (Rice)).